A 272-amino-acid polypeptide reads, in one-letter code: NAD kinase (272 aa).

The active-site Proton acceptor is the aspartate 62. NAD(+) contacts are provided by residues 62–63, arginine 67, 129–130, arginine 140, lysine 157, aspartate 159, 170–175, alanine 194, and glutamine 229; these read DG, NE, and SSYSSS.

Belongs to the NAD kinase family. It depends on a divalent metal cation as a cofactor.

The protein localises to the cytoplasm. The catalysed reaction is NAD(+) + ATP = ADP + NADP(+) + H(+). Functionally, involved in the regulation of the intracellular balance of NAD and NADP, and is a key enzyme in the biosynthesis of NADP. Catalyzes specifically the phosphorylation on 2'-hydroxyl of the adenosine moiety of NAD to yield NADP. The sequence is that of NAD kinase from Thermoplasma volcanium (strain ATCC 51530 / DSM 4299 / JCM 9571 / NBRC 15438 / GSS1).